The chain runs to 551 residues: Alkaline nuclease (551 aa).

Belongs to the herpesviridae alkaline nuclease family. Interacts with major DNA-binding protein; this interaction increases the nuclease processivity of the alkaline exonuclease.

Its subcellular location is the host nucleus. The protein resides in the host cytoplasm. In terms of biological role, plays a role in processing non linear or branched viral DNA intermediates in order to promote the production of mature packaged unit-length linear progeny viral DNA molecules. Exhibits endonuclease and exonuclease activities and accepts both double-stranded and single-stranded DNA as substrate. Exonuclease digestion of DNA is in the 5'-&gt; 3' direction and the products are 5'-monophosphate nucleosides. Additionally, forms a recombinase with the major DNA-binding protein, which displays strand exchange activity. The chain is Alkaline nuclease from Varicella-zoster virus (strain Oka vaccine) (HHV-3).